The sequence spans 356 residues: MAGLKLQAVTKSWDGKTQVIKPLTLDVADGEFIVMVGPSGCGKSTLLRMVAGLERVTTGDIWIDRKRVTEMEPKDRGIAMVFQNYALYPHMSVEENMAWGLKIRGMGKQQIAERVKEAARILELDGLLKRRPRELSGGQRQRVAMGRAIVREPAVFLFDEPLSNLDAKLRVQMRLELQQLHRRLKTTSLYVTHDQVEAMTLAQRVMVMNGGVAEQIGTPVEVYEKPASLFVASFIGSPAMNLLAGRVNNEGTHFELDGGITLPLNGGYRQYAGRKMTLGIRPEHIALSLQAEGGVPLVMDTLEILGADNLAHGRWGEQKLVVRLAHQERPTAGSTLWLHLPENQLHLFDGETGQRV.

Positions 4–235 constitute an ABC transporter domain; the sequence is LKLQAVTKSW…PASLFVASFI (232 aa). An ATP-binding site is contributed by 37–44; it reads GPSGCGKS.

This sequence belongs to the ABC transporter superfamily. sn-glycerol-3-phosphate importer (TC 3.A.1.1.3) family. In terms of assembly, the complex is composed of two ATP-binding proteins (UgpC), two transmembrane proteins (UgpA and UgpE) and a solute-binding protein (UgpB).

Its subcellular location is the cell inner membrane. The catalysed reaction is sn-glycerol 3-phosphate(out) + ATP + H2O = sn-glycerol 3-phosphate(in) + ADP + phosphate + H(+). Part of the ABC transporter complex UgpBAEC involved in sn-glycerol-3-phosphate (G3P) import. Responsible for energy coupling to the transport system. This chain is sn-glycerol-3-phosphate import ATP-binding protein UgpC, found in Escherichia coli O6:H1 (strain CFT073 / ATCC 700928 / UPEC).